The sequence spans 284 residues: 2-dehydro-3-deoxyphosphooctonate aldolase (284 aa).

Belongs to the KdsA family.

The protein localises to the cytoplasm. The catalysed reaction is D-arabinose 5-phosphate + phosphoenolpyruvate + H2O = 3-deoxy-alpha-D-manno-2-octulosonate-8-phosphate + phosphate. The protein operates within carbohydrate biosynthesis; 3-deoxy-D-manno-octulosonate biosynthesis; 3-deoxy-D-manno-octulosonate from D-ribulose 5-phosphate: step 2/3. It functions in the pathway bacterial outer membrane biogenesis; lipopolysaccharide biosynthesis. The protein is 2-dehydro-3-deoxyphosphooctonate aldolase of Burkholderia cenocepacia (strain HI2424).